The primary structure comprises 613 residues: V-type proton ATPase catalytic subunit A isoform 2 (613 aa).

ATP is bound at residue 240–247 (GAFGCGKT).

It belongs to the ATPase alpha/beta chains family. V-ATPase is a heteromultimeric enzyme composed of a peripheral catalytic V1 complex (main components: subunits A, B, C, D, E, and F) attached to an integral membrane V0 proton pore complex (main component: the proteolipid protein).

It catalyses the reaction ATP + H2O + 4 H(+)(in) = ADP + phosphate + 5 H(+)(out). Catalytic subunit of the peripheral V1 complex of vacuolar ATPase. V-ATPase vacuolar ATPase is responsible for acidifying a variety of intracellular compartments in eukaryotic cells. This is V-type proton ATPase catalytic subunit A isoform 2 from Acetabularia acetabulum (Mermaid's wine glass).